Here is a 335-residue protein sequence, read N- to C-terminus: Anthranilate phosphoribosyltransferase (335 aa).

Residues glycine 79, 82 to 83 (GD), serine 87, 89 to 92 (NIST), 107 to 115 (KHGNRSITS), and serine 119 each bind 5-phospho-alpha-D-ribose 1-diphosphate. Position 79 (glycine 79) interacts with anthranilate. Serine 91 is a Mg(2+) binding site. Residue asparagine 110 coordinates anthranilate. Anthranilate is bound at residue arginine 165. Mg(2+) contacts are provided by aspartate 224 and glutamate 225.

It belongs to the anthranilate phosphoribosyltransferase family. Homodimer. It depends on Mg(2+) as a cofactor.

It catalyses the reaction N-(5-phospho-beta-D-ribosyl)anthranilate + diphosphate = 5-phospho-alpha-D-ribose 1-diphosphate + anthranilate. It participates in amino-acid biosynthesis; L-tryptophan biosynthesis; L-tryptophan from chorismate: step 2/5. In terms of biological role, catalyzes the transfer of the phosphoribosyl group of 5-phosphorylribose-1-pyrophosphate (PRPP) to anthranilate to yield N-(5'-phosphoribosyl)-anthranilate (PRA). The protein is Anthranilate phosphoribosyltransferase of Lactococcus lactis subsp. lactis (strain IL1403) (Streptococcus lactis).